Consider the following 71-residue polypeptide: Conotoxin Pl071 (71 aa).

Positions 1–20 are cleaved as a signal peptide; it reads MSRLFMILLVICVITLGTDA. The propeptide occupies 21 to 31; sequence SQAEDSGTEKR. Tyrosine 69 is modified (tyrosine amide).

The protein belongs to the conotoxin NSf-1 superfamily. As to expression, expressed by the venom duct.

The protein localises to the secreted. Its function is as follows. Probable neurotoxin with unknown target. Possibly targets ion channels. This chain is Conotoxin Pl071, found in Conus planorbis (Planorbis cone).